The sequence spans 110 residues: uncharacterized protein (110 aa).

The protein localises to the plastid. It is found in the chloroplast. This is an uncharacterized protein from Auxenochlorella pyrenoidosa (Freshwater green alga).